A 96-amino-acid chain; its full sequence is ESAT-6-like protein EsxR (96 aa).

The protein belongs to the WXG100 family. ESAT-6 subfamily.

The protein resides in the secreted. This Mycobacterium bovis (strain ATCC BAA-935 / AF2122/97) protein is ESAT-6-like protein EsxR.